The chain runs to 268 residues: ELL-associated factor 1 (268 aa).

The interval 106-268 is disordered; the sequence is IQVKKTRAEG…LSESGSDSDD (163 aa). The span at 128-154 shows a compositional bias: pro residues; the sequence is ARPPQPSQPPPPPPPMPFRAPTKPPAG. Phosphoserine is present on S165. Over residues 171 to 181 the composition is skewed to basic and acidic residues; the sequence is DDIKRELRAEV. The necessary for transactivation activity stretch occupies residues 182–262; sequence DIIEQMSSSS…LRNDLQLSES (81 aa). Low complexity predominate over residues 188 to 203; that stretch reads SSSSGSSSSDSESSSG. Residues 238 to 268 show a composition bias toward polar residues; it reads NGTSRPQGSSQLMNTLRNDLQLSESGSDSDD.

It belongs to the EAF family. Component of the super elongation complex (SEC), at least composed of EAF1, EAF2, CDK9, MLLT3/AF9, AFF (AFF1 or AFF4), the P-TEFb complex and ELL (ELL, ELL2 or ELL3). Interacts with ELL and ELL2.

Its subcellular location is the nucleus speckle. It localises to the nucleus. The protein localises to the cajal body. Functionally, acts as a transcriptional transactivator of ELL and ELL2 elongation activities. The sequence is that of ELL-associated factor 1 (Eaf1) from Mus musculus (Mouse).